A 286-amino-acid polypeptide reads, in one-letter code: uncharacterized protein (286 aa).

A disordered region spans residues tyrosine 152 to threonine 182. Residues valine 198–glutamate 218 traverse the membrane as a helical segment. Residues arginine 239–isoleucine 278 form a disordered region. Polar residues predominate over residues glutamine 247–threonine 257.

It localises to the membrane. This is an uncharacterized protein from Bos taurus (Bovine).